Reading from the N-terminus, the 445-residue chain is StAR-related lipid transfer protein 3 (445 aa).

The Cytoplasmic portion of the chain corresponds to 1–51 (MSKLPRELTRDLERSLPAVASLGSSLSHSQSLSSHLLPPPEKRRAISDVRR). The region spanning 46–217 (ISDVRRTFCL…YSPPESFAGS (172 aa)) is the MENTAL domain. The chain crosses the membrane as a helical span at residues 52-72 (TFCLFVTFDLLFISLLWIIEL). The Extracellular portion of the chain corresponds to 73 to 94 (NTNTGIRKNLEQEIIQYNFKTS). The helical transmembrane segment at 95 to 115 (FFDIFVLAFFRFSGLLLGYAV) threads the bilayer. Over 116–120 (LRLRH) the chain is Cytoplasmic. A helical transmembrane segment spans residues 121–141 (WWVIAVTTLVSSAFLIVKVIL). The Extracellular segment spans residues 142 to 148 (SELLSKG). The helical transmembrane segment at 149–169 (AFGYLLPIVSFVLAWLETWFL) threads the bilayer. Residues 170–445 (DFKVLPQEAE…QRISELGARA (276 aa)) lie on the Cytoplasmic side of the membrane. The short motif at 206-212 (QFYSPPE) is the FFAT element. Residue Ser209 is modified to Phosphoserine. One can recognise an START domain in the interval 230-443 (SFSAQEREYI…LRQRISELGA (214 aa)).

It belongs to the STARD3 family. In terms of assembly, homodimer. Interacts (via the MENTAL domain) with STARD3NL. Interacts (via phosphorylated FFAT motif) with VAPA (via MSP domain). Interacts (via phosphorylated FFAT motif) with VAPB (via MSP domain). Interacts (via phosphorylated FFAT motif) with MOSPD2 (via MSP domain); this interaction allows enrichment of MOSPD2 around endosomes. In terms of processing, phosphorylation at Ser-209 is necessary and sufficient for the direct interaction of the phosphorylated FFAT motif with the MSP domain of MOSPD2, VAPA and VAPB and allows the tethering of two membranes that participates in the formation of ER-endosome contacts. Phosphorylation of the FFAT motif leads to conformation changes. Additional phosphorylations around the core FFAT motif (QFYSPPE) are not essential but strengthen the interaction with MOSPD2, VAPA and VAPB. Phosphorylation at Ser-209 of FFAT motif drives membrane tethering between the endoplasmic reticulum and late endosomes via interaction with VAPA and VAPB that in turn allows the efficient transport of sterol mediated by the START domain. In terms of tissue distribution, expressed in retina.

It localises to the late endosome membrane. The catalysed reaction is cholesterol(in) = cholesterol(out). Functionally, sterol-binding protein that mediates cholesterol transport from the endoplasmic reticulum to endosomes. The sterol transport mechanism is triggered by phosphorylation of FFAT motif that leads to membrane tethering between the endoplasmic reticulum and late endosomes via interaction with VAPA and VAPB. Acts as a lipid transfer protein that redirects sterol to the endosome at the expense of the cell membrane and favors membrane formation inside endosomes. May also mediate cholesterol transport between other membranes, such as mitochondria membrane or cell membrane. However, such results need additional experimental evidences; probably mainly mediates cholesterol transport from the endoplasmic reticulum to endosomes. Does not activate transcriptional cholesterol sensing. Able to bind other lipids, such as lutein, a xanthophyll carotenoids that form the macular pigment of the retina. The sequence is that of StAR-related lipid transfer protein 3 from Homo sapiens (Human).